The following is a 21-amino-acid chain: Pseudogermin (21 aa).

Belongs to the germin family. In terms of assembly, homotetramer.

Its subcellular location is the secreted. The protein resides in the extracellular space. It localises to the apoplast. It is found in the cell wall. Its function is as follows. May subsume the role of germin at the low water potentials during embryogenesis. This is Pseudogermin from Triticum aestivum (Wheat).